The sequence spans 597 residues: Aspartate--tRNA ligase (597 aa).

E180 serves as a coordination point for L-aspartate. The interval 204 to 207 (QLFK) is aspartate. R226 contributes to the L-aspartate binding site. ATP is bound by residues 226–228 (RDE) and Q235. H454 contacts L-aspartate. E488 is an ATP binding site. R495 lines the L-aspartate pocket. 540–543 (GLDR) provides a ligand contact to ATP.

It belongs to the class-II aminoacyl-tRNA synthetase family. Type 1 subfamily. As to quaternary structure, homodimer.

The protein localises to the cytoplasm. The catalysed reaction is tRNA(Asp) + L-aspartate + ATP = L-aspartyl-tRNA(Asp) + AMP + diphosphate. Its function is as follows. Catalyzes the attachment of L-aspartate to tRNA(Asp) in a two-step reaction: L-aspartate is first activated by ATP to form Asp-AMP and then transferred to the acceptor end of tRNA(Asp). This is Aspartate--tRNA ligase from Clostridium perfringens (strain ATCC 13124 / DSM 756 / JCM 1290 / NCIMB 6125 / NCTC 8237 / Type A).